Here is a 145-residue protein sequence, read N- to C-terminus: D-aminoacyl-tRNA deacylase (145 aa).

Residues Gly137–Pro138 carry the Gly-cisPro motif, important for rejection of L-amino acids motif.

It belongs to the DTD family. In terms of assembly, homodimer.

The protein localises to the cytoplasm. The catalysed reaction is glycyl-tRNA(Ala) + H2O = tRNA(Ala) + glycine + H(+). It carries out the reaction a D-aminoacyl-tRNA + H2O = a tRNA + a D-alpha-amino acid + H(+). Its function is as follows. An aminoacyl-tRNA editing enzyme that deacylates mischarged D-aminoacyl-tRNAs. Also deacylates mischarged glycyl-tRNA(Ala), protecting cells against glycine mischarging by AlaRS. Acts via tRNA-based rather than protein-based catalysis; rejects L-amino acids rather than detecting D-amino acids in the active site. By recycling D-aminoacyl-tRNA to D-amino acids and free tRNA molecules, this enzyme counteracts the toxicity associated with the formation of D-aminoacyl-tRNA entities in vivo and helps enforce protein L-homochirality. This is D-aminoacyl-tRNA deacylase from Salmonella agona (strain SL483).